The sequence spans 861 residues: Glucans biosynthesis glucosyltransferase H (861 aa).

A run of 6 helical transmembrane segments spans residues 142-162 (FILLLLMLAQTSVATYYMKGI), 188-208 (VLPYVIQFGILALFAILFCWV), 516-536 (VFLTGVMSYLSAPLWFFFLVL), 573-593 (LFSTTLTLLFLPKLLSVMLIW), 600-620 (FGGVIRVTLSMLLEMFFSVLL), and 683-703 (FLWWLSPIVGSLILSIPVSVI).

This sequence belongs to the glycosyltransferase 2 family. OpgH subfamily.

It is found in the cell inner membrane. It functions in the pathway glycan metabolism; osmoregulated periplasmic glucan (OPG) biosynthesis. Involved in the biosynthesis of osmoregulated periplasmic glucans (OPGs). The polypeptide is Glucans biosynthesis glucosyltransferase H (Pseudomonas aeruginosa (strain LESB58)).